Consider the following 306-residue polypeptide: Acetyl-coenzyme A carboxylase carboxyl transferase subunit beta (306 aa).

Residues L25–T294 enclose the CoA carboxyltransferase N-terminal domain. Positions V286 to A306 are disordered. Positions N287 to P299 are enriched in polar residues.

Belongs to the AccD/PCCB family. In terms of assembly, acetyl-CoA carboxylase is a heterohexamer composed of biotin carboxyl carrier protein (AccB), biotin carboxylase (AccC) and two subunits each of ACCase subunit alpha (AccA) and ACCase subunit beta (AccD).

The protein resides in the cytoplasm. It carries out the reaction N(6)-carboxybiotinyl-L-lysyl-[protein] + acetyl-CoA = N(6)-biotinyl-L-lysyl-[protein] + malonyl-CoA. It participates in lipid metabolism; malonyl-CoA biosynthesis; malonyl-CoA from acetyl-CoA: step 1/1. In terms of biological role, component of the acetyl coenzyme A carboxylase (ACC) complex. Biotin carboxylase (BC) catalyzes the carboxylation of biotin on its carrier protein (BCCP) and then the CO(2) group is transferred by the transcarboxylase to acetyl-CoA to form malonyl-CoA. The chain is Acetyl-coenzyme A carboxylase carboxyl transferase subunit beta from Bartonella quintana (strain Toulouse) (Rochalimaea quintana).